We begin with the raw amino-acid sequence, 274 residues long: Mitochondrial S-adenosylmethionine carrier protein (274 aa).

3 Solcar repeats span residues 4–77 (PGFV…VKWF), 86–168 (LTPM…LKAL), and 177–265 (VDSW…THSL). A run of 6 helical transmembrane segments spans residues 5–25 (GFVAALVAGGVAGVSVDLILF), 49–69 (IYAGVPSAAIGSFPNAAAFFI), 85–105 (YLTPMKHMLAASAGEVVACLI), 142–162 (RGYKSTVLREIPFSLVQFPLW), 182–202 (SAVCGAFAGGFAAAVTTPLDV), and 238–258 (FAGVFPRMAAISLGGFIFLGA).

This sequence belongs to the mitochondrial carrier (TC 2.A.29) family. Widely expressed. Highly expressed in testis, with moderate expression in brain, heart, kidney, lung, skeletal muscle, pancreas, small intestine and liver, and low expression in spleen.

The protein resides in the mitochondrion inner membrane. The catalysed reaction is S-adenosyl-L-homocysteine(out) + S-adenosyl-L-methionine(in) = S-adenosyl-L-homocysteine(in) + S-adenosyl-L-methionine(out). With respect to regulation, strongly inhibited by tannic acid and Bromocresol Purple. Mitochondrial S-adenosyl-L-methionine/S-adenosyl-L-homocysteine antiporter. Mediates the exchange of cytosolic S-adenosyl-L-methionine, the predominant methyl-group donor for macromolecule methylation processes, for mitochondrial S-adenosylhomocysteine(SAH), a by-product of methylation reactions. This Homo sapiens (Human) protein is Mitochondrial S-adenosylmethionine carrier protein.